The primary structure comprises 532 residues: Probable cytochrome c oxidase subunit 1 (532 aa).

A run of 8 helical transmembrane segments spans residues 33 to 53, 74 to 94, 95 to 115, 118 to 138, 163 to 183, 200 to 220, 252 to 272, and 284 to 304; these read IMYI…SLLF, VLIT…ALFG, GFGN…FPRL, ISFW…FVDG, MAIF…INLI, PLFV…MPVL, LFWF…FGIV, and IFGY…GFIV. Histidine 79 is a Fe(II)-heme a binding site. Histidine 258 and tyrosine 262 together coordinate Cu cation. The Cu cation site is built by histidine 307 and histidine 308. The next 2 helical transmembrane spans lie at 318–338 and 355–375; these read ALIY…IKIF and MLFS…GIIL. Histidine 393 serves as a coordination point for heme a3. Helical transmembrane passes span 394-414, 431-451, and 473-493; these read FHYT…YYWF, FWIT…LGLA, and IGAG…FYTL. Fe(II)-heme a is bound at residue histidine 395.

Belongs to the heme-copper respiratory oxidase family.

The protein resides in the cell membrane. The catalysed reaction is 4 Fe(II)-[cytochrome c] + O2 + 8 H(+)(in) = 4 Fe(III)-[cytochrome c] + 2 H2O + 4 H(+)(out). The protein operates within energy metabolism; oxidative phosphorylation. Cytochrome c oxidase is the component of the respiratory chain that catalyzes the reduction of oxygen to water. Subunits 1-3 form the functional core of the enzyme complex. CO I is the catalytic subunit of the enzyme. Electrons originating in cytochrome c are transferred via the copper A center of subunit 2 and heme A of subunit 1 to the bimetallic center formed by heme A3 and copper B. The sequence is that of Probable cytochrome c oxidase subunit 1 (ctaD) from Rickettsia bellii (strain RML369-C).